Reading from the N-terminus, the 465-residue chain is Adenosylhomocysteinase (465 aa).

Substrate-binding residues include Thr56, Asp131, and Glu191. 192 to 194 (TTT) provides a ligand contact to NAD(+). Substrate contacts are provided by Lys221 and Asp225. NAD(+)-binding positions include Asn226, 255-260 (GYGDVG), Glu278, Asn313, 334-336 (IGH), and Asn379.

This sequence belongs to the adenosylhomocysteinase family. Requires NAD(+) as cofactor.

The protein resides in the cytoplasm. It catalyses the reaction S-adenosyl-L-homocysteine + H2O = L-homocysteine + adenosine. It functions in the pathway amino-acid biosynthesis; L-homocysteine biosynthesis; L-homocysteine from S-adenosyl-L-homocysteine: step 1/1. May play a key role in the regulation of the intracellular concentration of adenosylhomocysteine. The polypeptide is Adenosylhomocysteinase (Bartonella tribocorum (strain CIP 105476 / IBS 506)).